Consider the following 620-residue polypeptide: MSFDIAKYPTLALVDSTQELRLLPKESLPKLCDELRRYLLDSVSRSSGHFASGLGTVELTVALHYVYNTPFDQLIWDVGHQAYPHKILTGRRDKIGTIRQKGGLHPFPWRGESEYDVLSVGHSSTSISAGIGIAVAAEKEGKNRRTVCVIGDGAITAGMAFEAMNHAGDIRPDMLVVLNDNEMSISENVGALNNHLAQLLSGKLYSSLREGGKKVFSGVPPIKELLKRTEEHIKGMVVPGTLFEELGFNYIGPVDGHDVLGLITTLKNMRDLKGPQFLHIMTKKGRGYEPAEKDPITFHAVPKFDPSSGCLPKSSGGLPSYSKIFGDWLCETAAKDNKLMAITPAMREGSGMVEFSRKFPDRYFDVAIAEQHAVTFAAGLAIGGYKPIVAIYSTFLQRAYDQVLHDVAIQKLPVLFAIDRAGIVGADGQTHQGAFDLSYLRCIPEMVIMTPSDENECRQMLYTGYHYNDGPSAVRYPRGNAVGVELTPLEKLPIGKGIVKRRGEKLAILNFGTLMPEAAKVAESLNATLVDMRFVKPLDEALILEMAASHEALVTVEENAIMGGAGSGVNEVLMAHRKPVPVLNIGLPDFFIPQGTQEEMRAELGLDATGMEAKIKAWLA.

Thiamine diphosphate contacts are provided by residues histidine 80 and 121-123 (GHS). Residue aspartate 152 participates in Mg(2+) binding. Thiamine diphosphate contacts are provided by residues 153-154 (GA), asparagine 181, tyrosine 288, and glutamate 370. Residue asparagine 181 participates in Mg(2+) binding.

It belongs to the transketolase family. DXPS subfamily. Homodimer. It depends on Mg(2+) as a cofactor. The cofactor is thiamine diphosphate.

It catalyses the reaction D-glyceraldehyde 3-phosphate + pyruvate + H(+) = 1-deoxy-D-xylulose 5-phosphate + CO2. Its pathway is metabolic intermediate biosynthesis; 1-deoxy-D-xylulose 5-phosphate biosynthesis; 1-deoxy-D-xylulose 5-phosphate from D-glyceraldehyde 3-phosphate and pyruvate: step 1/1. Catalyzes the acyloin condensation reaction between C atoms 2 and 3 of pyruvate and glyceraldehyde 3-phosphate to yield 1-deoxy-D-xylulose-5-phosphate (DXP). This is 1-deoxy-D-xylulose-5-phosphate synthase from Escherichia coli O7:K1 (strain IAI39 / ExPEC).